We begin with the raw amino-acid sequence, 109 residues long: uncharacterized protein (109 aa).

The tract at residues 1 to 26 is disordered; sequence MTPRSLPRYGNSSRRKSFPMHRPSNV.

This is an uncharacterized protein from Mycobacterium bovis (strain ATCC BAA-935 / AF2122/97).